Here is a 92-residue protein sequence, read N- to C-terminus: LYR motif-containing protein 4 homolog (92 aa).

A coiled-coil region spans residues 40–68 (ANKAIRDFAEIDRQMEAGKQNLELIRRQV).

Belongs to the complex I LYR family. Component of the mitochondrial core iron-sulfur cluster (ISC) assembly complex at least composed of the cysteine desulfurase Nfs1, the scaffold protein IscU, the accessory protein bcn92/Isd11/Lyrm4, and probably fh/frataxin. Interacts with Nfs1.

Its subcellular location is the mitochondrion. Its function is as follows. Stabilizing factor of the core iron-sulfur cluster (ISC) assembly complex that regulates the stability and cysteine desulfurase activity of Nfs1 and participates in the [2Fe-2S] clusters assembly on the scaffolding protein IscU. This is LYR motif-containing protein 4 homolog from Drosophila subobscura (Fruit fly).